A 125-amino-acid polypeptide reads, in one-letter code: Secretion system apparatus protein SsaO (125 aa).

The sequence is that of Secretion system apparatus protein SsaO (ssaO) from Salmonella typhimurium (strain LT2 / SGSC1412 / ATCC 700720).